A 233-amino-acid polypeptide reads, in one-letter code: MAVVSLSEMMEAGAHFGHQTRRWNPKMSKYIYCARNGVHIIDLVKTALCMNNAYKWTRNAAKGGKRFLFVGTKKQASDVVAQEATRCGAAYVNQRWLGGMLTNWTTMKARIERLKDLERMESSGSIAMRPKKEAAVLRRELERLQKYLGGLKGMRRLPDVVVLVDQRRETNAVLEARKLDISLVSMLDTNCDPDLCEVPIPCNDDAVRSVQLILGRLADAINEGRKASNNEKN.

This sequence belongs to the universal ribosomal protein uS2 family.

The sequence is that of Small ribosomal subunit protein uS2 from Prochlorococcus marinus (strain MIT 9312).